Reading from the N-terminus, the 210-residue chain is Late histone H1 (210 aa).

Disordered stretches follow at residues 1 to 21 and 86 to 210; these read MSAA…HPPT and SFKL…AAKK. The 75-residue stretch at 17–91 folds into the H15 domain; that stretch reads AHPPTSQMVV…GASGSFKLGK (75 aa). The span at 104–113 shows a compositional bias: basic residues; it reads AAAKKAKLAA. A compositionally biased stretch (basic and acidic residues) spans 114-123; the sequence is KKKEQKEKKA. The span at 124–210 shows a compositional bias: basic residues; it reads AKTKARKEKL…KPAAKKAAKK (87 aa).

Belongs to the histone H1/H5 family.

The protein localises to the nucleus. It localises to the chromosome. In terms of biological role, histones H1 are necessary for the condensation of nucleosome chains into higher-order structures. The sequence is that of Late histone H1 from Lytechinus pictus (Painted sea urchin).